We begin with the raw amino-acid sequence, 440 residues long: Deoxyguanosinetriphosphate triphosphohydrolase-like protein (440 aa).

The region spanning Arg62–Gly255 is the HD domain.

Belongs to the dGTPase family. Type 2 subfamily.

This chain is Deoxyguanosinetriphosphate triphosphohydrolase-like protein, found in Vibrio parahaemolyticus serotype O3:K6 (strain RIMD 2210633).